Consider the following 336-residue polypeptide: N-acetyl-gamma-glutamyl-phosphate reductase (336 aa).

The active site involves Cys-143.

The protein belongs to the NAGSA dehydrogenase family. Type 1 subfamily.

The protein resides in the cytoplasm. The enzyme catalyses N-acetyl-L-glutamate 5-semialdehyde + phosphate + NADP(+) = N-acetyl-L-glutamyl 5-phosphate + NADPH + H(+). It participates in amino-acid biosynthesis; L-arginine biosynthesis; N(2)-acetyl-L-ornithine from L-glutamate: step 3/4. In terms of biological role, catalyzes the NADPH-dependent reduction of N-acetyl-5-glutamyl phosphate to yield N-acetyl-L-glutamate 5-semialdehyde. The sequence is that of N-acetyl-gamma-glutamyl-phosphate reductase from Dictyoglomus thermophilum (strain ATCC 35947 / DSM 3960 / H-6-12).